The following is a 153-amino-acid chain: Xanthine-guanine phosphoribosyltransferase (153 aa).

5-phospho-alpha-D-ribose 1-diphosphate is bound by residues 37-38, Arg-69, and 88-96; these read RG and DDLVDTGGT. Residue Arg-69 participates in GMP binding. A Mg(2+)-binding site is contributed by Asp-89. Positions 92 and 135 each coordinate guanine. Residues Asp-92 and Ile-135 each coordinate xanthine. Residues 92 to 96 and 134 to 135 contribute to the GMP site; these read DTGGT and WI.

This sequence belongs to the purine/pyrimidine phosphoribosyltransferase family. XGPT subfamily. In terms of assembly, homotetramer. It depends on Mg(2+) as a cofactor.

The protein resides in the cell membrane. The enzyme catalyses GMP + diphosphate = guanine + 5-phospho-alpha-D-ribose 1-diphosphate. It carries out the reaction XMP + diphosphate = xanthine + 5-phospho-alpha-D-ribose 1-diphosphate. It catalyses the reaction IMP + diphosphate = hypoxanthine + 5-phospho-alpha-D-ribose 1-diphosphate. It functions in the pathway purine metabolism; GMP biosynthesis via salvage pathway; GMP from guanine: step 1/1. It participates in purine metabolism; XMP biosynthesis via salvage pathway; XMP from xanthine: step 1/1. Purine salvage pathway enzyme that catalyzes the transfer of the ribosyl-5-phosphate group from 5-phospho-alpha-D-ribose 1-diphosphate (PRPP) to the N9 position of the 6-oxopurines guanine and xanthine to form the corresponding ribonucleotides GMP (guanosine 5'-monophosphate) and XMP (xanthosine 5'-monophosphate), with the release of PPi. To a lesser extent, also acts on hypoxanthine. In Buchnera aphidicola subsp. Baizongia pistaciae (strain Bp), this protein is Xanthine-guanine phosphoribosyltransferase.